Consider the following 152-residue polypeptide: Cytochrome c-type biogenesis CcmH-like mitochondrial protein (152 aa).

Over 1–83 the chain is Mitochondrial intermembrane; the sequence is MATEEDVKQR…ILYTPKFDLQ (83 aa). Heme-binding residues include cysteine 26 and cysteine 29. A helical membrane pass occupies residues 84-104; sequence TAAIWLSPVIVGGVAAGVWAY. The Mitochondrial matrix portion of the chain corresponds to 105–152; sequence KKHRQRTNVHIMALNLVRGVPLTPREKETMLDVLTPPPPANKWWWPGK.

This sequence belongs to the CcmH/CycL/Ccl2/NrfF family.

Its subcellular location is the mitochondrion inner membrane. Its function is as follows. Plays a role in mitochondrial cytochrome c maturation. Probable component of a heme lyase complex involved in the reduction of apocytochrome c. The polypeptide is Cytochrome c-type biogenesis CcmH-like mitochondrial protein (Oryza sativa subsp. indica (Rice)).